We begin with the raw amino-acid sequence, 104 residues long: Large ribosomal subunit protein uL24 (104 aa).

It belongs to the universal ribosomal protein uL24 family. Part of the 50S ribosomal subunit.

One of two assembly initiator proteins, it binds directly to the 5'-end of the 23S rRNA, where it nucleates assembly of the 50S subunit. Functionally, one of the proteins that surrounds the polypeptide exit tunnel on the outside of the subunit. The chain is Large ribosomal subunit protein uL24 from Yersinia enterocolitica serotype O:8 / biotype 1B (strain NCTC 13174 / 8081).